The following is a 516-amino-acid chain: Potassium voltage-gated channel subfamily A member 10 (516 aa).

Residues 223 to 244 (VALVSVLVIVISIIIFCMETLP) traverse the membrane as a helical segment. N261 is a glycosylation site (N-linked (GlcNAc...) asparagine). The helical transmembrane segment at 276 to 296 (FFVIETACIIWFSFELFVRFI) threads the bilayer. The helical transmembrane segment at 308–328 (IMNIIDIVSIIPYFVTLTTEL) threads the bilayer. Residue N339 is glycosylated (N-linked (GlcNAc...) asparagine). A helical; Voltage-sensor membrane pass occupies residues 344–363 (ILRIIRLVRVFRIFKLSRHS). A helical membrane pass occupies residues 380 to 400 (LGLLIFFLFIGVILFSSAVYF). The Selectivity filter signature appears at 426 to 431 (TVGYGD). Residues 441-461 (IVGTLCAIAGVLTIALPVPVI) traverse the membrane as a helical segment. An N-linked (GlcNAc...) asparagine glycan is attached at N503.

Belongs to the potassium channel family. A (Shaker) (TC 1.A.1.2) subfamily. Kv1.8/KCNA10 sub-subfamily. As to quaternary structure, homotetramer. Detected in brain, cochlear sensory epithelium, cochlear ganglion, tegumentum vasculosum. Detected at low levels in cochlear lagena.

The protein localises to the membrane. It catalyses the reaction K(+)(in) = K(+)(out). With respect to regulation, the channel activity is up-regulated by cAMP. Functionally, voltage-gated potassium ion channel that mediates K(+) permeability of excitable membranes. When opened in response to the voltage difference across the membrane, KCNA10 channel selectively allows the flow of potassium ions across the membrane down their electrochemical gradient. The chain is Potassium voltage-gated channel subfamily A member 10 (KCNA10) from Gallus gallus (Chicken).